Reading from the N-terminus, the 519-residue chain is Cytochrome P450 monooxygenase FPY7 (519 aa).

The chain crosses the membrane as a helical span at residues 12-34 (SLSLRWKIIVTLLAIYTLRIIGT). C465 contacts heme.

Belongs to the cytochrome P450 family. Requires heme as cofactor.

The protein localises to the membrane. The protein operates within secondary metabolite biosynthesis. Functionally, cytochrome P450 monooxygenase; part of the gene cluster that mediates the biosynthesis of the gamma-pyrones fusapyrone (FPY) and deoxyfusapyrone (dFPY). FPY is an undecaketide and thus likely synthesized by the polyketide synthase FPY1 from acetyl-CoA functioning as starter unit and the addition of 10 malonyl-CoA extender units by successive Claisen-condensations. Next to this, FPY shares some rare features: C-glycosylated 4-deoxyglucose at C-3, a gem-dimethyl group at C-13, and an alpha-beta to beta-gamma double bond shift at C-20. During FPY biosynthesis mono-C-methyl groups are transferred to the tetra-, penta-, hexa- and heptaketide, while two C-methyl groups are transferred to the nonaketide, suggesting that the CMet domain is programmed to selectively catalyze two successive C-alpha-methylation reactions of the nonaketide, while other alpha-carbons are non- or mono-methylated only. While the origin of the 4'-deoxyglucose moiety remains opaque, its transfer to C-3 is most likely mediated by the C-glycosyltransferase FPY2. Next to this, the hydroxyl group present at C-33 and discriminating between FPY and dFPY, is likely to be installed by the cytochrome P450 monooxygenase FPY7. No putative function can be predicted for the remaining genes FPY3-FPY6. The sequence is that of Cytochrome P450 monooxygenase FPY7 from Fusarium mangiferae (Mango malformation disease fungus).